Here is a 576-residue protein sequence, read N- to C-terminus: Proton pump-interactor 3B (576 aa).

The disordered stretch occupies residues 34–63; it reads SEVTTDEEEDTIFSGGDSSSGLAAEEDSSG. Coiled-coil stretches lie at residues 132–155 and 205–241; these read RMVI…LRCT and EKEA…SDKL. Basic and acidic residues predominate over residues 369 to 381; it reads RSEKVHKMNREDS. Residues 369–395 form a disordered region; sequence RSEKVHKMNREDSSSNSSEDGNVITDK. A coiled-coil region spans residues 411-467; that stretch reads KKKEEEIDEEALKERKREEQLEKARLVMERKRKLQEKAAAKAAIRAQKEAEKKLKAI. The helical transmembrane segment at 555-575 threads the bilayer; that stretch reads WVWGLSSAALAVSLVLVVLLL.

This sequence belongs to the plant Proton pump-interactor protein family.

Its subcellular location is the cell membrane. The protein localises to the endoplasmic reticulum membrane. Functionally, may regulate plasma membrane ATPase activity. The sequence is that of Proton pump-interactor 3B (PPI3B) from Arabidopsis thaliana (Mouse-ear cress).